The sequence spans 116 residues: MSEKKEARLRRARRARAKIRELGVTRLAIHRTPRHIYAQLISGDGSTVIASASTLDKDLRSGKTGNADAAKAVGALIAERAKAAGVTQVAFDRSGFKYHGRIKALADAAREGGLEF.

The protein belongs to the universal ribosomal protein uL18 family. Part of the 50S ribosomal subunit; part of the 5S rRNA/L5/L18/L25 subcomplex. Contacts the 5S and 23S rRNAs.

Functionally, this is one of the proteins that bind and probably mediate the attachment of the 5S RNA into the large ribosomal subunit, where it forms part of the central protuberance. The polypeptide is Large ribosomal subunit protein uL18 (Cellvibrio japonicus (strain Ueda107) (Pseudomonas fluorescens subsp. cellulosa)).